Here is a 96-residue protein sequence, read N- to C-terminus: MF6 protein (96 aa).

The chain is MF6 protein from Myxoma virus (strain Uriarra) (MYXV).